Here is a 577-residue protein sequence, read N- to C-terminus: Mitochondrial-processing peptidase subunit alpha (577 aa).

Residues methionine 1–threonine 35 constitute a mitochondrion transit peptide. The segment at serine 259 to leucine 301 is disordered. The span at serine 269–leucine 301 shows a compositional bias: low complexity.

It belongs to the peptidase M16 family. Heterodimer of mpp (alpha) and pep (beta) subunits, forming the mitochondrial processing protease (MPP) in which mpp is involved in substrate recognition and binding and pep is the catalytic subunit.

It is found in the mitochondrion matrix. Functionally, substrate recognition and binding subunit of the essential mitochondrial processing protease (MPP), which cleaves the mitochondrial sequence off newly imported precursors proteins. This Neurospora crassa (strain ATCC 24698 / 74-OR23-1A / CBS 708.71 / DSM 1257 / FGSC 987) protein is Mitochondrial-processing peptidase subunit alpha.